Reading from the N-terminus, the 288-residue chain is uncharacterized protein (288 aa).

Residues 92 to 112 traverse the membrane as a helical segment; sequence LPTILVILGVIVVIAIVYAII. Residues 121 to 183 are disordered; the sequence is DDHNAASEKA…NDSEKLEIKA (63 aa). Composition is skewed to basic and acidic residues over residues 136–146 and 154–181; these read SKYEIPKDSTL and SEKETDTKKETKENEDKKKENDSEKLEI. The stretch at 147 to 185 forms a coiled coil; it reads KENQNNSSEKETDTKKETKENEDKKKENDSEKLEIKAAG.

The protein resides in the cell membrane. This is an uncharacterized protein from Bacillus subtilis (strain 168).